The following is a 440-amino-acid chain: Putative epoxide hydrolase (440 aa).

The tract at residues 1-21 (MTKTLAEQPGEGAAPVSPSPS) is disordered. The segment at residues 1-49 (MTKTLAEQPGEGAAPVSPSPSRRALLHGAAGLGALAAGAAVAGPGLAFA) is a signal peptide (tat-type signal).

The protein belongs to the peptidase S33 family. Predicted to be exported by the Tat system. The position of the signal peptide cleavage has not been experimentally proven.

The catalysed reaction is an epoxide + H2O = an ethanediol. This Stigmatella aurantiaca (strain DW4/3-1) protein is Putative epoxide hydrolase.